We begin with the raw amino-acid sequence, 312 residues long: Pantothenate kinase (312 aa).

97–104 (GSVAVGKS) is an ATP binding site.

This sequence belongs to the prokaryotic pantothenate kinase family.

Its subcellular location is the cytoplasm. The enzyme catalyses (R)-pantothenate + ATP = (R)-4'-phosphopantothenate + ADP + H(+). It functions in the pathway cofactor biosynthesis; coenzyme A biosynthesis; CoA from (R)-pantothenate: step 1/5. The polypeptide is Pantothenate kinase (Mycolicibacterium paratuberculosis (strain ATCC BAA-968 / K-10) (Mycobacterium paratuberculosis)).